Here is a 190-residue protein sequence, read N- to C-terminus: ATP synthase subunit C lysine N-methyltransferase (190 aa).

It belongs to the ANT/ATPSC lysine N-methyltransferase family.

Its subcellular location is the mitochondrion. The enzyme catalyses L-lysyl-[protein] + 3 S-adenosyl-L-methionine = N(6),N(6),N(6)-trimethyl-L-lysyl-[protein] + 3 S-adenosyl-L-homocysteine + 3 H(+). Mitochondrial protein-lysine N-methyltransferase that trimethylates ATP synthase subunit C. Trimethylation is required for proper incorporation of the C subunit into the ATP synthase complex and mitochondrial respiration. This is ATP synthase subunit C lysine N-methyltransferase from Caenorhabditis elegans.